Consider the following 338-residue polypeptide: 1-aminocyclopropane-1-carboxylate deaminase (338 aa).

N6-(pyridoxal phosphate)lysine is present on Lys51. The Nucleophile role is filled by Ser78.

This sequence belongs to the ACC deaminase/D-cysteine desulfhydrase family. In terms of assembly, homotrimer. Pyridoxal 5'-phosphate serves as cofactor.

The catalysed reaction is 1-aminocyclopropane-1-carboxylate + H2O = 2-oxobutanoate + NH4(+). Its function is as follows. Catalyzes a cyclopropane ring-opening reaction, the irreversible conversion of 1-aminocyclopropane-1-carboxylate (ACC) to ammonia and alpha-ketobutyrate. Allows growth on ACC as a nitrogen source. The sequence is that of 1-aminocyclopropane-1-carboxylate deaminase from Paraburkholderia xenovorans (strain LB400).